A 536-amino-acid chain; its full sequence is MSADLARIAEEVSHRRTFAIISHPDAGKTTLTEKLLLFSGAIQMAGTVKGKKGGKFATSDWMEIEKQRGISVASSVMQFDYRDHTVNLLDTPGHQDFSEDTYRVLTAVDSALMVIDAAKGVEEQTIKLLNVCRLRNTPIVTFMNKCDREVRDSLELLDEVENVLKIRCAPITWPIGMGKTFRGVYSLLSDAVILFEAGTEKLVSDIEVIQGIDNPRLDELFPLEMEQLRMEIELVKGASNEWSLEEFLAGELTPVFFGSAINNFGVREILNALIDWAPAPQERDATVRNVDPKEAKFSGFVFKIQANMDPKHRDRIAFLRVCSGQFERGMKMKHLRLNRDIAASSVVTFMSHDREIVEEAFAGDIIGIPNHGNIQIGDSFSEGEDLAFTGIPFFAPELFRSVRIKNPLKLKQLQKGLQQLGEEGAVQVFKPHSGGDLILGAVGVLQFEVVASRLAAEYGVDAIFESASIWSARWFSCDDRKKLDEFVKTLQMNIATDAGGNLAYLAPNRVNLQLTQERWPDIVFHETREHAVKLND.

The tr-type G domain maps to 13 to 281; sequence SHRRTFAIIS…ALIDWAPAPQ (269 aa). Residues 22–29, 90–94, and 144–147 contribute to the GTP site; these read SHPDAGKT, DTPGH, and NKCD.

This sequence belongs to the TRAFAC class translation factor GTPase superfamily. Classic translation factor GTPase family. PrfC subfamily.

It is found in the cytoplasm. Increases the formation of ribosomal termination complexes and stimulates activities of RF-1 and RF-2. It binds guanine nucleotides and has strong preference for UGA stop codons. It may interact directly with the ribosome. The stimulation of RF-1 and RF-2 is significantly reduced by GTP and GDP, but not by GMP. The polypeptide is Peptide chain release factor 3 (Chromobacterium violaceum (strain ATCC 12472 / DSM 30191 / JCM 1249 / CCUG 213 / NBRC 12614 / NCIMB 9131 / NCTC 9757 / MK)).